The sequence spans 238 residues: Probable transcriptional regulatory protein CT_457 (238 aa).

Residues M1–K21 form a disordered region. Basic residues predominate over residues N9–K21.

This sequence belongs to the TACO1 family.

It is found in the cytoplasm. The polypeptide is Probable transcriptional regulatory protein CT_457 (Chlamydia trachomatis serovar D (strain ATCC VR-885 / DSM 19411 / UW-3/Cx)).